A 470-amino-acid polypeptide reads, in one-letter code: Choline/ethanolamine transporter flvcr2a (470 aa).

Residues 1–23 (MCDKADNHIDVQPEGNLEVSSVS) are Cytoplasmic-facing. Residues 24-48 (STRLYRRRWVILLLFSSYSLCNAFQ) form a helical membrane-spanning segment. Choline-binding residues include asparagine 45, alanine 46, and tryptophan 49. Topologically, residues 49-66 (WIQYGIINNIFMKFYQVS) are extracellular. Residues 67-94 (SFAVDWLSMVYMLTYIPFIFPVTWLLER) traverse the membrane as a helical segment. At 95–96 (KG) the chain is on the cytoplasmic side. The chain crosses the membrane as a helical span at residues 97–116 (LRVVALLAASINCAGTWIKV). Topologically, residues 117–123 (ASVQPSL) are extracellular. Residues 124–152 (FWVTMLGQFACSCAQVFILGMPSQVASVW) form a helical membrane-spanning segment. Choline contacts are provided by glutamine 138 and leucine 142. Over 153 to 157 (FGSDE) the chain is Cytoplasmic. A helical transmembrane segment spans residues 158-183 (VSTACAIGVFGNQLGIAIGFLVPPVL). Residues 184 to 188 (VPNVE) lie on the Extracellular side of the membrane. Residues 189-218 (DMGELAEHISIMFYITAAVATLIFLLVVFV) form a helical membrane-spanning segment. The Cytoplasmic segment spans residues 219-254 (FQEKPETPPSLAQVALRNMPTGQHSYLASIARLMCN). Residues 255 to 285 (KPFILLLISYGLNVGSFYAVSTLLNRMIIEH) form a helical membrane-spanning segment. Tyrosine 272 serves as a coordination point for choline. Residues 286 to 289 (YPGE) lie on the Extracellular side of the membrane. The chain crosses the membrane as a helical span at residues 290 to 318 (EVNAGRIGLTLVVAGVVGSLICGVWLDKT). The Cytoplasmic segment spans residues 319-320 (KT). A helical transmembrane segment spans residues 321 to 343 (YKQTTLSVYLLSFVGMLIYSFTL). Residues 344 to 346 (NLG) are Extracellular-facing. The helical transmembrane segment at 347–376 (HLWLVFLTSGVLGFFMTGYLPLGFEFAVEL) threads the bilayer. Residues 377-384 (TYPESEGT) are Cytoplasmic-facing. Residues 385–410 (SSGLLNCSAQVFGIAFTIIQGKIIDH) form a helical membrane-spanning segment. Glutamine 394 is a choline binding site. The Extracellular segment spans residues 411–412 (FG). The helical transmembrane segment at 413-435 (TLAGNIFLCVFLLIGSIMTAFIK) threads the bilayer. At 436–470 (SDLRRQKANQETGGNADSSVHPQHGETLPVKEVKM) the chain is on the cytoplasmic side. The span at 445-456 (QETGGNADSSVH) shows a compositional bias: polar residues. The interval 445–470 (QETGGNADSSVHPQHGETLPVKEVKM) is disordered.

This sequence belongs to the major facilitator superfamily. Feline leukemia virus subgroup C receptor (TC 2.A.1.28.1) family.

The protein resides in the cell membrane. Its subcellular location is the mitochondrion membrane. It is found in the endoplasmic reticulum membrane. The enzyme catalyses choline(out) = choline(in). The catalysed reaction is ethanolamine(in) = ethanolamine(out). It carries out the reaction heme b(in) = heme b(out). Its function is as follows. Choline uniporter that specifically mediates choline uptake at the blood-brain-barrier. Responsible for the majority of choline uptake across the blood-brain-barrier from the circulation into the brain. Choline, a nutrient critical for brain development, is a precursor of phosphatidylcholine, as well as betaine. Also mediates transport of ethanolamine. Choline and ethanolamine transport is not coupled with proton transport and is exclusively driven by the choline gradient across the plasma membrane. Also acts as a heme b transporter. The chain is Choline/ethanolamine transporter flvcr2a from Danio rerio (Zebrafish).